Reading from the N-terminus, the 338-residue chain is Ketol-acid reductoisomerase (NADP(+)) (338 aa).

Positions 1 to 181 constitute a KARI N-terminal Rossmann domain; the sequence is MKVFYDKDCD…GGGKGGIIET (181 aa). Residues 24–27, R47, and S52 each bind NADP(+); that span reads YGSQ. The active site involves H107. G133 lines the NADP(+) pocket. Residues 182–327 enclose the KARI C-terminal knotted domain; that stretch reads NFKEETETDL…GQLRAMMPWI (146 aa). 4 residues coordinate Mg(2+): D190, E194, E226, and E230. A substrate-binding site is contributed by S251.

Belongs to the ketol-acid reductoisomerase family. The cofactor is Mg(2+).

It carries out the reaction (2R)-2,3-dihydroxy-3-methylbutanoate + NADP(+) = (2S)-2-acetolactate + NADPH + H(+). It catalyses the reaction (2R,3R)-2,3-dihydroxy-3-methylpentanoate + NADP(+) = (S)-2-ethyl-2-hydroxy-3-oxobutanoate + NADPH + H(+). It participates in amino-acid biosynthesis; L-isoleucine biosynthesis; L-isoleucine from 2-oxobutanoate: step 2/4. The protein operates within amino-acid biosynthesis; L-valine biosynthesis; L-valine from pyruvate: step 2/4. Functionally, involved in the biosynthesis of branched-chain amino acids (BCAA). Catalyzes an alkyl-migration followed by a ketol-acid reduction of (S)-2-acetolactate (S2AL) to yield (R)-2,3-dihydroxy-isovalerate. In the isomerase reaction, S2AL is rearranged via a Mg-dependent methyl migration to produce 3-hydroxy-3-methyl-2-ketobutyrate (HMKB). In the reductase reaction, this 2-ketoacid undergoes a metal-dependent reduction by NADPH to yield (R)-2,3-dihydroxy-isovalerate. The polypeptide is Ketol-acid reductoisomerase (NADP(+)) (Delftia acidovorans (strain DSM 14801 / SPH-1)).